A 155-amino-acid polypeptide reads, in one-letter code: MAKLIFLFATLALFVLLANASIQTTVIEVDEEEDNQLWRCQRQFLQHQRLRACQRFIHRRAQFGGQPDELEDEVEDDNDDENQPRRPALRQCCNQLRQVDRPCVCPVLRQAAQQVLQRQIIQGPQQLRRLFDAARNLPNICNIPNIGACPFRAWP.

The N-terminal stretch at 1–20 (MAKLIFLFATLALFVLLANA) is a signal peptide. A propeptide spanning residues 21–35 (SIQTTVIEVDEEEDN) is cleaved from the precursor. Gln36 is subject to Pyrrolidone carboxylic acid. Cystine bridges form between Cys40-Cys103, Cys53-Cys92, Cys93-Cys141, and Cys105-Cys149. Residues 64-86 (GGQPDELEDEVEDDNDDENQPRR) are disordered. A compositionally biased stretch (acidic residues) spans 68-81 (DELEDEVEDDNDDE). The propeptide occupies 69 to 82 (ELEDEVEDDNDDEN). Pyrrolidone carboxylic acid is present on Gln83. A propeptide is located at residue Pro155.

This sequence belongs to the 2S seed storage albumins family. As to quaternary structure, heterodimer of a small A and a large B chain linked by disulfide bonds.

Its function is as follows. Heat stable 2S seed storage protein having sweetness-inducing activity. The chain is Sweet protein mabinlin-2 from Capparis masaikai (Mabinlang).